Reading from the N-terminus, the 283-residue chain is Pantothenate synthetase (283 aa).

Residue 30-37 (MGNLHDGH) participates in ATP binding. His37 functions as the Proton donor in the catalytic mechanism. Gln61 contributes to the (R)-pantoate binding site. Gln61 is a beta-alanine binding site. An ATP-binding site is contributed by 149 to 152 (GEKD). Gln155 is a binding site for (R)-pantoate. 186 to 189 (LSSR) is a binding site for ATP.

Belongs to the pantothenate synthetase family. As to quaternary structure, homodimer.

The protein localises to the cytoplasm. It carries out the reaction (R)-pantoate + beta-alanine + ATP = (R)-pantothenate + AMP + diphosphate + H(+). The protein operates within cofactor biosynthesis; (R)-pantothenate biosynthesis; (R)-pantothenate from (R)-pantoate and beta-alanine: step 1/1. In terms of biological role, catalyzes the condensation of pantoate with beta-alanine in an ATP-dependent reaction via a pantoyl-adenylate intermediate. The chain is Pantothenate synthetase from Shigella sonnei (strain Ss046).